Consider the following 369-residue polypeptide: Ribosomal RNA large subunit methyltransferase M (369 aa).

S-adenosyl-L-methionine contacts are provided by residues S198, 231–234 (APGG), D250, D270, and D287. Catalysis depends on K316, which acts as the Proton acceptor.

It belongs to the class I-like SAM-binding methyltransferase superfamily. RNA methyltransferase RlmE family. RlmM subfamily. Monomer.

It is found in the cytoplasm. The catalysed reaction is cytidine(2498) in 23S rRNA + S-adenosyl-L-methionine = 2'-O-methylcytidine(2498) in 23S rRNA + S-adenosyl-L-homocysteine + H(+). Its function is as follows. Catalyzes the 2'-O-methylation at nucleotide C2498 in 23S rRNA. This chain is Ribosomal RNA large subunit methyltransferase M, found in Idiomarina loihiensis (strain ATCC BAA-735 / DSM 15497 / L2-TR).